The primary structure comprises 414 residues: Probable serine/threonine-protein kinase PBL26 (414 aa).

C3 carries the S-palmitoyl cysteine lipid modification. The segment covering 17–41 (RDSDNSYRRNGEVTGRDNNKTHPEN) has biased composition (basic and acidic residues). A disordered region spans residues 17–55 (RDSDNSYRRNGEVTGRDNNKTHPENPKTVNEQNKNNDED). Positions 79 to 356 (FRQECLIGEG…SDVVTALGFL (278 aa)) constitute a Protein kinase domain. ATP-binding positions include 85–93 (IGEGGFGRV) and K108. At Y153 the chain carries Phosphotyrosine. D206 functions as the Proton acceptor in the catalytic mechanism. S240 is subject to Phosphoserine. T246 is subject to Phosphothreonine. Phosphotyrosine is present on Y254. A disordered region spans residues 364 to 394 (ISVPHYDDPPQPSDETSVEDSVAAEERERAV).

It belongs to the protein kinase superfamily. Ser/Thr protein kinase family. In terms of processing, palmitoylation at Cys-3 and Cys-6 are required for plasma membrane location.

It localises to the cell membrane. The catalysed reaction is L-seryl-[protein] + ATP = O-phospho-L-seryl-[protein] + ADP + H(+). It catalyses the reaction L-threonyl-[protein] + ATP = O-phospho-L-threonyl-[protein] + ADP + H(+). Functionally, may be involved in plant defense signaling. In Arabidopsis thaliana (Mouse-ear cress), this protein is Probable serine/threonine-protein kinase PBL26.